Consider the following 620-residue polypeptide: tRNA uridine 5-carboxymethylaminomethyl modification enzyme MnmG (620 aa).

Residues Gly13–Gly18, Val125, and Ser182 each bind FAD. Residue Gly280–Phe294 coordinates NAD(+). Residue Asn377 participates in FAD binding.

It belongs to the MnmG family. Homodimer. Heterotetramer of two MnmE and two MnmG subunits. It depends on FAD as a cofactor.

Its subcellular location is the cytoplasm. In terms of biological role, NAD-binding protein involved in the addition of a carboxymethylaminomethyl (cmnm) group at the wobble position (U34) of certain tRNAs, forming tRNA-cmnm(5)s(2)U34. The polypeptide is tRNA uridine 5-carboxymethylaminomethyl modification enzyme MnmG (Sulfurihydrogenibium sp. (strain YO3AOP1)).